Here is an 80-residue protein sequence, read N- to C-terminus: Peptide LaIT2 (80 aa).

The N-terminal stretch at 1-21 is a signal peptide; sequence MAKHLIVMFLVIMVISSLVDC. Positions 49–80 constitute a BetaSPN-type CS-alpha/beta domain; sequence QYGCPIISNMCEDHCRRKKMEGQCDLLDCVCS. Cystine bridges form between Cys52–Cys72, Cys59–Cys77, and Cys63–Cys79.

The protein belongs to the long chain scorpion toxin family. Class 2 subfamily. Expressed by the venom gland.

Its subcellular location is the secreted. In terms of biological role, dual-function toxin that acts both as an insecticidal and an antimicrobial peptide. May inhibit voltage-gated potassium channels (Kv). This amphipathic peptide causes significant antimicrobial activity against E.coli (MIC=7 uM) but does not show any activity against S.aureus even at high concentration. In vivo, causes paralysis or death to crickets. This Liocheles australasiae (Dwarf wood scorpion) protein is Peptide LaIT2.